Consider the following 93-residue polypeptide: Small ribosomal subunit protein bS16 (93 aa).

This sequence belongs to the bacterial ribosomal protein bS16 family.

The polypeptide is Small ribosomal subunit protein bS16 (Dictyoglomus turgidum (strain DSM 6724 / Z-1310)).